A 297-amino-acid polypeptide reads, in one-letter code: 4-hydroxy-tetrahydrodipicolinate synthase (297 aa).

Residue Thr47 coordinates pyruvate. Catalysis depends on Tyr136, which acts as the Proton donor/acceptor. Lys165 functions as the Schiff-base intermediate with substrate in the catalytic mechanism. Ile206 provides a ligand contact to pyruvate.

This sequence belongs to the DapA family. As to quaternary structure, homotetramer; dimer of dimers.

It localises to the cytoplasm. The enzyme catalyses L-aspartate 4-semialdehyde + pyruvate = (2S,4S)-4-hydroxy-2,3,4,5-tetrahydrodipicolinate + H2O + H(+). It participates in amino-acid biosynthesis; L-lysine biosynthesis via DAP pathway; (S)-tetrahydrodipicolinate from L-aspartate: step 3/4. Its function is as follows. Catalyzes the condensation of (S)-aspartate-beta-semialdehyde [(S)-ASA] and pyruvate to 4-hydroxy-tetrahydrodipicolinate (HTPA). This is 4-hydroxy-tetrahydrodipicolinate synthase from Campylobacter concisus (strain 13826).